A 588-amino-acid chain; its full sequence is Protein decapentaplegic (588 aa).

A signal peptide spans 1-23; it reads MRAWLLLLAVLATFQTIVRVAST. The propeptide occupies 24-456; the sequence is EDISQRFIAA…DGRHKARSIR (433 aa). Residues 74–169 are disordered; the sequence is FSEPASFSDS…STESHQSSSI (96 aa). Basic and acidic residues predominate over residues 96 to 119; that stretch reads SKSDANRQFNEVHKPRTDQLENSK. N-linked (GlcNAc...) asparagine glycosylation is present at asparagine 120. A compositionally biased stretch (basic residues) spans 140–153; that stretch reads RSHHKKSHHHRSHQ. Low complexity predominate over residues 156–169; the sequence is QASASTESHQSSSI. Asparagine 342 and asparagine 377 each carry an N-linked (GlcNAc...) asparagine glycan. The tract at residues 454 to 484 is disordered; sequence SIRDVSGGEGGGKGGRNKRQPRRPTRRKNHD. Positions 468–481 are enriched in basic residues; it reads GRNKRQPRRPTRRK. 3 disulfides stabilise this stretch: cysteine 487/cysteine 553, cysteine 516/cysteine 585, and cysteine 520/cysteine 587. Asparagine 529 is a glycosylation site (N-linked (GlcNAc...) asparagine).

It belongs to the TGF-beta family. As to quaternary structure, heterodimers of scw/dpp are the active subunit, dpp/dpp homodimers elicit a basal response and scw/scw homodimers alone are ineffective in specifying a dorsal pattern. Component of a complex composed of dpp, sog and tsg. Interacts with nord and gbb; the interaction interferes with dpp secretion. In terms of tissue distribution, expressed in the dorsal region of the embryo, and becomes enriched in a dorsal midline stripe just prior to gastrulation. Expressed in midgut mesoderm and in two overlapping regions of the embryonic large intestine. Expressed in a long-range concentration gradient in the wing imaginal disk.

It is found in the secreted. Its function is as follows. Required during oogenesis for eggshell patterning and dorsal/ventral patterning of the embryo. Acts as a morphogen during embryogenesis to pattern the dorsal/ventral axis, specifying dorsal ectoderm and amnioserosa cell fate within the dorsal half of the embryo; this activity is antagonized by binding to sog and tsg. Induces the formation of visceral mesoderm and the heart in early embryos. Required later in embryogenesis for dorsal closure and patterning of the hindgut. Also functions postembryonically as a long-range morphogen during imaginal disk development; is responsible for the progression of the morphogenetic furrow during eye development. Patterns the wing imaginal disk along its anterior/posterior axis and has a role in positioning pro-veins. Also required to subdivide the wing disk along the proximal/distal axis into body wall (notum) and wing. Ensures the correct architecture of wing epithelial cells. Has multiple roles in the developing tracheal system, controlling directed tracheal cell migration during embryogenesis and later specifying the fate of fusion cells in the tracheal branches. Required for viability of larvae. Essential for the maintenance and division of germline stem cells in the ovary. Signals via the type I receptor tkv, the type II receptor punt, and in some tissues via the type I receptor sax, in a signaling cascade that leads to activation and repression of target genes. The polypeptide is Protein decapentaplegic (dpp) (Drosophila melanogaster (Fruit fly)).